Consider the following 231-residue polypeptide: Probable transglycosylase SceD (231 aa).

The signal sequence occupies residues 1–27; the sequence is MKKTLLASSLAVGLGIVAGNAGHEAHA. Polar residues predominate over residues 93 to 116; it reads SAQAPATNNVEPSAVQANQVQSQE. The disordered stretch occupies residues 93–152; sequence SAQAPATNNVEPSAVQANQVQSQEVEAPQNAQTQQPQASTSNNSQVTATPTESKASEGSS. Over residues 119–137 the composition is skewed to low complexity; that stretch reads APQNAQTQQPQASTSNNSQ. Over residues 138-152 the composition is skewed to polar residues; that stretch reads VTATPTESKASEGSS.

Belongs to the transglycosylase family. SceD subfamily.

It localises to the secreted. Functionally, is able to cleave peptidoglycan and affects clumping and separation of bacterial cells. This chain is Probable transglycosylase SceD (sceD), found in Staphylococcus aureus (strain Mu3 / ATCC 700698).